Reading from the N-terminus, the 157-residue chain is Crossover junction endodeoxyribonuclease RuvC (157 aa).

Catalysis depends on residues Asp7, Glu67, and Asp139. Residues Asp7, Glu67, and Asp139 each coordinate Mg(2+).

This sequence belongs to the RuvC family. Homodimer which binds Holliday junction (HJ) DNA. The HJ becomes 2-fold symmetrical on binding to RuvC with unstacked arms; it has a different conformation from HJ DNA in complex with RuvA. In the full resolvosome a probable DNA-RuvA(4)-RuvB(12)-RuvC(2) complex forms which resolves the HJ. Mg(2+) is required as a cofactor.

The protein resides in the cytoplasm. The enzyme catalyses Endonucleolytic cleavage at a junction such as a reciprocal single-stranded crossover between two homologous DNA duplexes (Holliday junction).. In terms of biological role, the RuvA-RuvB-RuvC complex processes Holliday junction (HJ) DNA during genetic recombination and DNA repair. Endonuclease that resolves HJ intermediates. Cleaves cruciform DNA by making single-stranded nicks across the HJ at symmetrical positions within the homologous arms, yielding a 5'-phosphate and a 3'-hydroxyl group; requires a central core of homology in the junction. The consensus cleavage sequence is 5'-(A/T)TT(C/G)-3'. Cleavage occurs on the 3'-side of the TT dinucleotide at the point of strand exchange. HJ branch migration catalyzed by RuvA-RuvB allows RuvC to scan DNA until it finds its consensus sequence, where it cleaves and resolves the cruciform DNA. This chain is Crossover junction endodeoxyribonuclease RuvC, found in Prochlorococcus marinus (strain MIT 9312).